A 474-amino-acid chain; its full sequence is MSHYHIVGIAGAGMSAIAHLLLDQGHTVSGSDLTTNRATEALAARGVRIWQGHDPAYVRGADAVLATAAIRGEHPELTAAAALGIPRLSRADLWREWSAQRPVIAVAGTHGKTTTSAMTALALRGGGVACGFLIGADVPALGGSAQWGDPTAPLVIEADEYDRVFLALTPAMAIVTNVEWDHPDIYPTATDYAAAFAEFAAQVRDRRRLLLCADDPGTAALDVDGQARWYGIDEQIACDPVSCRLAPLDWTASRVTVTAEGQQFDLWYYDRRTFARRFALMVTLAVPGIHNVRNATAALAAAALWGADLQAAGAALATYRGSSRRFEVYGEVAGVTVIDDYAHHPTEVQATIAAAQQRYPGRRVVVYVQPHTFSRTRSLWERWPEACRAAAIVSIGDVYPAREQGDPVALATELVAYLVAYGVVAHYGGGIATAAERLVALIQPGDVVLVLGAGDSNRVAAMVIAQLQRVQAEA.

108 to 114 lines the ATP pocket; sequence GTHGKTT.

This sequence belongs to the MurCDEF family.

It localises to the cytoplasm. It catalyses the reaction UDP-N-acetyl-alpha-D-muramate + L-alanine + ATP = UDP-N-acetyl-alpha-D-muramoyl-L-alanine + ADP + phosphate + H(+). Its pathway is cell wall biogenesis; peptidoglycan biosynthesis. Its function is as follows. Cell wall formation. This Chloroflexus aggregans (strain MD-66 / DSM 9485) protein is UDP-N-acetylmuramate--L-alanine ligase.